Here is a 277-residue protein sequence, read N- to C-terminus: Large ribosomal subunit protein uL2 (277 aa).

The segment at 223–264 (VAMNPVDHPHGGGEGKTAAGRHPVSPWGTPSKGSRTRRNKRT) is disordered.

The protein belongs to the universal ribosomal protein uL2 family. As to quaternary structure, part of the 50S ribosomal subunit. Forms a bridge to the 30S subunit in the 70S ribosome.

Its function is as follows. One of the primary rRNA binding proteins. Required for association of the 30S and 50S subunits to form the 70S ribosome, for tRNA binding and peptide bond formation. It has been suggested to have peptidyltransferase activity; this is somewhat controversial. Makes several contacts with the 16S rRNA in the 70S ribosome. The chain is Large ribosomal subunit protein uL2 from Nitrosomonas eutropha (strain DSM 101675 / C91 / Nm57).